We begin with the raw amino-acid sequence, 290 residues long: Porphobilinogen deaminase (290 aa).

An S-(dipyrrolylmethanemethyl)cysteine modification is found at cysteine 238.

It belongs to the HMBS family. In terms of assembly, monomer. Requires dipyrromethane as cofactor.

It carries out the reaction 4 porphobilinogen + H2O = hydroxymethylbilane + 4 NH4(+). Its pathway is porphyrin-containing compound metabolism; protoporphyrin-IX biosynthesis; coproporphyrinogen-III from 5-aminolevulinate: step 2/4. Its function is as follows. Tetrapolymerization of the monopyrrole PBG into the hydroxymethylbilane pre-uroporphyrinogen in several discrete steps. The chain is Porphobilinogen deaminase from Caldicellulosiruptor saccharolyticus (strain ATCC 43494 / DSM 8903 / Tp8T 6331).